Reading from the N-terminus, the 225-residue chain is Heptaprenylglyceryl phosphate synthase (225 aa).

K6 contributes to the sn-glycerol 1-phosphate binding site. 2 residues coordinate Mg(2+): D8 and T34. Sn-glycerol 1-phosphate is bound by residues 153-158, G183, and 203-204; these read YVEYSG and GN.

Belongs to the GGGP/HepGP synthase family. Group I subfamily. Homodimer. Requires Mg(2+) as cofactor.

The catalysed reaction is sn-glycerol 1-phosphate + all-trans-heptaprenyl diphosphate = 3-heptaprenyl-sn-glycero-1-phosphate + diphosphate. The protein operates within membrane lipid metabolism; glycerophospholipid metabolism. Functionally, prenyltransferase that catalyzes in vivo the transfer of the heptaprenyl moiety of heptaprenyl pyrophosphate (HepPP; 35 carbon atoms) to the C3 hydroxyl of sn-glycerol-1-phosphate (G1P), producing heptaprenylglyceryl phosphate (HepGP). This reaction is an ether-bond-formation step in the biosynthesis of archaea-type G1P-based membrane lipids found in Bacillales. To a much lesser extent, is also able to use geranylgeranyl diphosphate (GGPP; C20) as the prenyl donor. This chain is Heptaprenylglyceryl phosphate synthase, found in Listeria monocytogenes serovar 1/2a (strain ATCC BAA-679 / EGD-e).